We begin with the raw amino-acid sequence, 250 residues long: Uridylate kinase (250 aa).

19–22 is a binding site for ATP; the sequence is KLSG. UMP is bound at residue glycine 61. ATP-binding residues include glycine 62 and arginine 66. Residues aspartate 81 and 142–149 contribute to the UMP site; that span reads TGNPFFTT. Residues threonine 169, glutamine 170, tyrosine 175, and aspartate 178 each coordinate ATP.

It belongs to the UMP kinase family. As to quaternary structure, homohexamer.

It localises to the cytoplasm. The enzyme catalyses UMP + ATP = UDP + ADP. Its pathway is pyrimidine metabolism; CTP biosynthesis via de novo pathway; UDP from UMP (UMPK route): step 1/1. With respect to regulation, inhibited by UTP. Its function is as follows. Catalyzes the reversible phosphorylation of UMP to UDP. This Rhodospirillum rubrum (strain ATCC 11170 / ATH 1.1.1 / DSM 467 / LMG 4362 / NCIMB 8255 / S1) protein is Uridylate kinase.